The sequence spans 90 residues: ATP synthase subunit c (90 aa).

Helical transmembrane passes span 4-24 and 53-73; these read FVYSAVAAGFGIAIAAFGCGI and IGLAMIESLSIYALVVSLILI.

This sequence belongs to the ATPase C chain family. As to quaternary structure, F-type ATPases have 2 components, F(1) - the catalytic core - and F(0) - the membrane proton channel. F(1) has five subunits: alpha(3), beta(3), gamma(1), delta(1), epsilon(1). F(0) has three main subunits: a(1), b(2) and c(10-14). The alpha and beta chains form an alternating ring which encloses part of the gamma chain. F(1) is attached to F(0) by a central stalk formed by the gamma and epsilon chains, while a peripheral stalk is formed by the delta and b chains.

It localises to the cell inner membrane. In terms of biological role, f(1)F(0) ATP synthase produces ATP from ADP in the presence of a proton or sodium gradient. F-type ATPases consist of two structural domains, F(1) containing the extramembraneous catalytic core and F(0) containing the membrane proton channel, linked together by a central stalk and a peripheral stalk. During catalysis, ATP synthesis in the catalytic domain of F(1) is coupled via a rotary mechanism of the central stalk subunits to proton translocation. Its function is as follows. Key component of the F(0) channel; it plays a direct role in translocation across the membrane. A homomeric c-ring of between 10-14 subunits forms the central stalk rotor element with the F(1) delta and epsilon subunits. The sequence is that of ATP synthase subunit c from Syntrophobacter fumaroxidans (strain DSM 10017 / MPOB).